A 144-amino-acid chain; its full sequence is Large ribosomal subunit protein uL15 (144 aa).

Residues 1-25 are disordered; sequence MFLNTIGARDGSRPEKKRVGRGIGS.

The protein belongs to the universal ribosomal protein uL15 family. In terms of assembly, part of the 50S ribosomal subunit.

Binds to the 23S rRNA. This chain is Large ribosomal subunit protein uL15, found in Methylococcus capsulatus (strain ATCC 33009 / NCIMB 11132 / Bath).